We begin with the raw amino-acid sequence, 432 residues long: D-amino acid dehydrogenase (432 aa).

3 to 17 (VLVLGGGVIGVTSAY) provides a ligand contact to FAD.

Belongs to the DadA oxidoreductase family. FAD serves as cofactor.

It catalyses the reaction a D-alpha-amino acid + A + H2O = a 2-oxocarboxylate + AH2 + NH4(+). It participates in amino-acid degradation; D-alanine degradation; NH(3) and pyruvate from D-alanine: step 1/1. Functionally, oxidative deamination of D-amino acids. In Delftia acidovorans (strain DSM 14801 / SPH-1), this protein is D-amino acid dehydrogenase.